A 152-amino-acid chain; its full sequence is Superoxide dismutase [Cu-Zn] (152 aa).

Cu cation contacts are provided by His45, His47, and His62. Cys56 and Cys145 are disulfide-bonded. The Zn(2+) site is built by His62, His70, His79, and Asp82. His119 is a Cu cation binding site.

Belongs to the Cu-Zn superoxide dismutase family. As to quaternary structure, homodimer. It depends on Cu cation as a cofactor. Zn(2+) serves as cofactor.

It localises to the cytoplasm. The catalysed reaction is 2 superoxide + 2 H(+) = H2O2 + O2. Functionally, destroys radicals which are normally produced within the cells and which are toxic to biological systems. This is Superoxide dismutase [Cu-Zn] (SODCC) from Nicotiana plumbaginifolia (Leadwort-leaved tobacco).